The chain runs to 559 residues: NXPE family member 3 (559 aa).

The N-terminal stretch at 1–30 (MWINFVKLRLFCCLLAVLMVVVLVVNVTQV) is a signal peptide. N-linked (GlcNAc...) asparagine glycosylation is found at Asn-26, Asn-237, and Asn-346.

It belongs to the NXPE family.

It localises to the secreted. In Bos taurus (Bovine), this protein is NXPE family member 3 (NXPE3).